A 209-amino-acid chain; its full sequence is Glutathione S-transferase 1-1 (209 aa).

A GST N-terminal domain is found at 1–81 (MADFYYLPGS…YLVEKYGKTD (81 aa)). Glutathione-binding positions include 51–53 (HTI) and 65–67 (ESR). Residues 87–209 (CPKKRAVINQ…GCLEFKKYFE (123 aa)) form the GST C-terminal domain.

The protein belongs to the GST superfamily. Theta family. Homodimer.

It carries out the reaction RX + glutathione = an S-substituted glutathione + a halide anion + H(+). Conjugation of reduced glutathione to a wide number of exogenous and endogenous hydrophobic electrophiles. The sequence is that of Glutathione S-transferase 1-1 (GstD1) from Drosophila yakuba (Fruit fly).